Here is a 259-residue protein sequence, read N- to C-terminus: Hydroxyacylglutathione hydrolase (259 aa).

Zn(2+)-binding residues include histidine 56, histidine 58, aspartate 60, histidine 61, histidine 112, aspartate 133, and histidine 171.

It belongs to the metallo-beta-lactamase superfamily. Glyoxalase II family. In terms of assembly, monomer. It depends on Zn(2+) as a cofactor.

The enzyme catalyses an S-(2-hydroxyacyl)glutathione + H2O = a 2-hydroxy carboxylate + glutathione + H(+). It participates in secondary metabolite metabolism; methylglyoxal degradation; (R)-lactate from methylglyoxal: step 2/2. Its function is as follows. Thiolesterase that catalyzes the hydrolysis of S-D-lactoyl-glutathione to form glutathione and D-lactic acid. This Pseudomonas entomophila (strain L48) protein is Hydroxyacylglutathione hydrolase.